The primary structure comprises 120 residues: Chemokine vCXCL1 (120 aa).

Belongs to the intercrine alpha (chemokine CxC) family. In terms of assembly, interacts with host CXCR1 and CXCR2.

In terms of biological role, acts as a functional chemokine, inducing calcium mobilization, chemotaxis, and degranulation of neutrophils. Contributes to the induction of neutrophil chemotaxis by interacting with host CXCR1 and CXCR2 receptors. The sequence is that of Chemokine vCXCL1 (UL146) from Human cytomegalovirus (strain Merlin) (HHV-5).